The primary structure comprises 196 residues: MQLKRVVEAKLPTPWGDFLMVGFEELATGHDHVALVYGDISGHTPVLARVHSECLTGDALFSLRCDCGFQLEAALTQIAEEGRGILLYHRQEGRNIGLLNKIRAYALQDQGYDTVEANHQLGFAADERDFTLCADMFKLLGVNEVRLLTNNPKKVEILTEAGINIVERVPLIVGRNPNNEHYLDTKAEKMGHLLNK.

49 to 53 (RVHSE) serves as a coordination point for GTP. Residues C54, C65, and C67 each contribute to the Zn(2+) site. GTP contacts are provided by residues Q70, 92–94 (EGR), and T114. D126 acts as the Proton acceptor in catalysis. R128 acts as the Nucleophile in catalysis. Positions 149 and 154 each coordinate GTP.

Belongs to the GTP cyclohydrolase II family. As to quaternary structure, homodimer. The cofactor is Zn(2+).

The catalysed reaction is GTP + 4 H2O = 2,5-diamino-6-hydroxy-4-(5-phosphoribosylamino)-pyrimidine + formate + 2 phosphate + 3 H(+). It functions in the pathway cofactor biosynthesis; riboflavin biosynthesis; 5-amino-6-(D-ribitylamino)uracil from GTP: step 1/4. Its function is as follows. Catalyzes the conversion of GTP to 2,5-diamino-6-ribosylamino-4(3H)-pyrimidinone 5'-phosphate (DARP), formate and pyrophosphate. The sequence is that of GTP cyclohydrolase-2 from Shigella dysenteriae serotype 1 (strain Sd197).